The chain runs to 343 residues: Small ribosomal subunit biogenesis GTPase RsgA (343 aa).

A CP-type G domain is found at 116-275; it reads RGQLKPVAAN…LIDSPGIREF (160 aa). Residues 163-166 and 217-225 each bind GTP; these read NKAD and GQSGVGKSS. Positions 299, 304, 306, and 312 each coordinate Zn(2+).

The protein belongs to the TRAFAC class YlqF/YawG GTPase family. RsgA subfamily. In terms of assembly, monomer. Associates with 30S ribosomal subunit, binds 16S rRNA. Zn(2+) is required as a cofactor.

It is found in the cytoplasm. Its function is as follows. One of several proteins that assist in the late maturation steps of the functional core of the 30S ribosomal subunit. Helps release RbfA from mature subunits. May play a role in the assembly of ribosomal proteins into the subunit. Circularly permuted GTPase that catalyzes slow GTP hydrolysis, GTPase activity is stimulated by the 30S ribosomal subunit. The polypeptide is Small ribosomal subunit biogenesis GTPase RsgA (Ectopseudomonas mendocina (strain ymp) (Pseudomonas mendocina)).